A 300-amino-acid polypeptide reads, in one-letter code: Neutral protease NprE (300 aa).

Ca(2+) is bound at residue Asp139. His143 lines the Zn(2+) pocket. Glu144 is an active-site residue. The Zn(2+) site is built by His147 and Glu167. Ca(2+) contacts are provided by Asp178, Asp181, Asp183, and Glu186. His228 serves as the catalytic Proton donor.

This sequence belongs to the peptidase M4 family. It depends on Ca(2+) as a cofactor. The cofactor is Zn(2+).

The protein localises to the secreted. The catalysed reaction is Similar, but not identical, to that of thermolysin.. In terms of biological role, extracellular zinc metalloprotease. The polypeptide is Neutral protease NprE (nprE) (Bacillus pumilus (Bacillus mesentericus)).